The following is a 373-amino-acid chain: Chorismate synthase (373 aa).

Position 46 (Arg-46) interacts with NADP(+). FMN contacts are provided by residues 123 to 125 (RSS), 251 to 252 (NA), Gly-295, 310 to 314 (KPTPS), and Arg-337.

Belongs to the chorismate synthase family. It depends on FMNH2 as a cofactor.

The catalysed reaction is 5-O-(1-carboxyvinyl)-3-phosphoshikimate = chorismate + phosphate. It functions in the pathway metabolic intermediate biosynthesis; chorismate biosynthesis; chorismate from D-erythrose 4-phosphate and phosphoenolpyruvate: step 7/7. Functionally, catalyzes the anti-1,4-elimination of the C-3 phosphate and the C-6 proR hydrogen from 5-enolpyruvylshikimate-3-phosphate (EPSP) to yield chorismate, which is the branch point compound that serves as the starting substrate for the three terminal pathways of aromatic amino acid biosynthesis. This reaction introduces a second double bond into the aromatic ring system. This chain is Chorismate synthase, found in Methanococcus maripaludis (strain DSM 14266 / JCM 13030 / NBRC 101832 / S2 / LL).